Reading from the N-terminus, the 170-residue chain is Protein SprT (170 aa).

Residues 23-164 (QLARQHFSVE…CRQCGDKLKF (142 aa)) form the SprT-like domain. Residue His-78 participates in Zn(2+) binding. Glu-79 is a catalytic residue. Residue His-82 coordinates Zn(2+).

It belongs to the SprT family. It depends on Zn(2+) as a cofactor.

The protein localises to the cytoplasm. The sequence is that of Protein SprT from Serratia proteamaculans (strain 568).